The primary structure comprises 89 residues: Small ribosomal subunit protein uS17 (89 aa).

The protein belongs to the universal ribosomal protein uS17 family. Part of the 30S ribosomal subunit.

Its function is as follows. One of the primary rRNA binding proteins, it binds specifically to the 5'-end of 16S ribosomal RNA. This is Small ribosomal subunit protein uS17 from Novosphingobium aromaticivorans (strain ATCC 700278 / DSM 12444 / CCUG 56034 / CIP 105152 / NBRC 16084 / F199).